The chain runs to 88 residues: DNA-directed RNA polymerase subunit omega (88 aa).

Belongs to the RNA polymerase subunit omega family. In terms of assembly, the RNAP catalytic core consists of 2 alpha, 1 beta, 1 beta' and 1 omega subunit. When a sigma factor is associated with the core the holoenzyme is formed, which can initiate transcription.

The enzyme catalyses RNA(n) + a ribonucleoside 5'-triphosphate = RNA(n+1) + diphosphate. Its function is as follows. Promotes RNA polymerase assembly. Latches the N- and C-terminal regions of the beta' subunit thereby facilitating its interaction with the beta and alpha subunits. This chain is DNA-directed RNA polymerase subunit omega, found in Thermobifida fusca (strain YX).